Reading from the N-terminus, the 107-residue chain is DNA-directed RNA polymerase subunit omega (107 aa).

It belongs to the RNA polymerase subunit omega family. In terms of assembly, the RNAP catalytic core consists of 2 alpha, 1 beta, 1 beta' and 1 omega subunit. When a sigma factor is associated with the core the holoenzyme is formed, which can initiate transcription.

The enzyme catalyses RNA(n) + a ribonucleoside 5'-triphosphate = RNA(n+1) + diphosphate. Promotes RNA polymerase assembly. Latches the N- and C-terminal regions of the beta' subunit thereby facilitating its interaction with the beta and alpha subunits. The chain is DNA-directed RNA polymerase subunit omega from Oenococcus oeni (strain ATCC BAA-331 / PSU-1).